Consider the following 528-residue polypeptide: Protein spinster homolog 1 (528 aa).

The tract at residues 1 to 49 (MAGSDTAPFLSQADDPDDGPVPGTPGLPGSTGNPKSEEPEVPDQEGLQR) is disordered. An N-acetylalanine modification is found at Ala-2. A run of 12 helical transmembrane segments spans residues 50–70 (ITGLSPGRSALIVAVLCYINL), 98–118 (GLIQTVFISSYMVLAPVFGYL), 127–147 (LMCGGIAFWSLVTLGSSFIPG), 160–180 (VGVGEASYSTIAPTLIADLFV), 187–207 (MLSIFYFAIPVGSGLGYIAGS), 218–238 (WALRVTPGLGVVAVLLLFLVV), 278–298 (LGFTAVAFVTGSLALWAPAFL), 323–343 (LIFGLITCLTGVLGVGLGVEI), 357–377 (LVCATGLLGSAPFLFLSLACA), 381–401 (IVATYIFIFIGETLLSMNWAI), 421–441 (FQIVLSHLLGDAGSPYLIGLI), and 465–485 (MLCAFVGALGGAAFLGTAIFI). Ser-518 bears the Phosphoserine mark.

This sequence belongs to the major facilitator superfamily. Spinster (TC 2.A.1.49) family. Interacts with BCL2 and BCL2L1.

Its subcellular location is the lysosome membrane. The protein resides in the mitochondrion inner membrane. The enzyme catalyses a 1-acyl-sn-glycero-3-phosphocholine(out) + H(+)(out) = a 1-acyl-sn-glycero-3-phosphocholine(in) + H(+)(in). It catalyses the reaction 1-hexadecanoyl-sn-glycero-3-phosphocholine(out) + H(+)(out) = 1-hexadecanoyl-sn-glycero-3-phosphocholine(in) + H(+)(in). The catalysed reaction is 1-(9Z-octadecenoyl)-sn-glycero-3-phosphocholine(out) + H(+)(out) = 1-(9Z-octadecenoyl)-sn-glycero-3-phosphocholine(in) + H(+)(in). It carries out the reaction 1-(5Z,8Z,11Z,14Z-eicosatetraenoyl)-sn-glycero-3-phosphocholine(out) + H(+)(out) = 1-(5Z,8Z,11Z,14Z-eicosatetraenoyl)-sn-glycero-3-phosphocholine(in) + H(+)(in). The enzyme catalyses 1-(4Z,7Z,10Z,13Z,16Z,19Z-docosahexaenoyl)-sn-glycero-3-phosphocholine(out) + H(+)(out) = 1-(4Z,7Z,10Z,13Z,16Z,19Z-docosahexaenoyl)-sn-glycero-3-phosphocholine(in) + H(+)(in). It catalyses the reaction a 1-acyl-sn-glycero-3-phosphoethanolamine(out) + H(+)(out) = a 1-acyl-sn-glycero-3-phosphoethanolamine(in) + H(+)(in). The catalysed reaction is 1-(9Z-octadecenoyl)-sn-glycero-3-phosphoethanolamine(out) + H(+)(out) = 1-(9Z-octadecenoyl)-sn-glycero-3-phosphoethanolamine(in) + H(+)(in). It carries out the reaction 1-acyl-sn-glycero-3-phospho-(1'-sn-glycerol)(out) + H(+)(out) = 1-acyl-sn-glycero-3-phospho-(1'-sn-glycerol)(in) + H(+)(in). The enzyme catalyses 1-(9Z-octadecenoyl)-sn-glycero-3-phospho-(1'-sn-glycerol)(out) + H(+)(out) = 1-(9Z-octadecenoyl)-sn-glycero-3-phospho-(1'-sn-glycerol)(in) + H(+)(in). It catalyses the reaction a 1-O-(1Z-alkenyl)-sn-glycero-3-phosphocholine(out) + H(+)(out) = a 1-O-(1Z-alkenyl)-sn-glycero-3-phosphocholine(in) + H(+)(in). The catalysed reaction is 1-(1Z-hexadecenyl)-sn-glycero-3-phosphocholine(out) + H(+)(out) = 1-(1Z-hexadecenyl)-sn-glycero-3-phosphocholine(in) + H(+)(in). It carries out the reaction a 1-O-(1Z-alkenyl)-sn-glycero-3-phosphoethanolamine(out) + H(+)(out) = a 1-O-(1Z-alkenyl)-sn-glycero-3-phosphoethanolamine(in) + H(+)(in). The enzyme catalyses 1-O-(1Z-hexadecenyl)-sn-glycero-3-phosphoethanolamine(out) + H(+)(out) = 1-O-(1Z-hexadecenyl)-sn-glycero-3-phosphoethanolamine(in) + H(+)(in). Functionally, plays a critical role in the phospholipid salvage pathway from lysosomes to the cytosol. Mediates the rate-limiting, proton-dependent, lysosomal efflux of lysophospholipids, which can then be reacylated by acyltransferases in the endoplasmic reticulum to form phospholipids. Selective for zwitterionic headgroups such as lysophosphatidylcholine (LPC) and lysophosphatidylethanolamine (LPE), can also transport lysophosphatidylglycerol (LPG), but not other anionic lysophospholipids, sphingosine, nor sphingomyelin. Transports lysophospholipids with saturated, monounsaturated, and polyunsaturated fatty acids, such as 1-hexadecanoyl-sn-glycero-3-phosphocholine, 1-(9Z-octadecenoyl)-sn-glycero-3-phosphocholine and 1-(4Z,7Z,10Z,13Z,16Z,19Z-docosahexaenoyl)-sn-glycero-3-phosphocholine, respectively. Can also transport lysoplasmalogen (LPC with a fatty alcohol) such as 1-(1Z-hexadecenyl)-sn-glycero-3-phosphocholine. Lysosomal LPC could function as intracellular signaling messenger. Essential player in lysosomal homeostasis. Crucial for cell survival under conditions of nutrient limitation. May be involved in necrotic or autophagic cell death. In Homo sapiens (Human), this protein is Protein spinster homolog 1 (SPNS1).